A 364-amino-acid chain; its full sequence is Putative agmatine deiminase 1 (364 aa).

The active-site Amidino-cysteine intermediate is the Cys-356.

This sequence belongs to the agmatine deiminase family.

The catalysed reaction is agmatine + H2O = N-carbamoylputrescine + NH4(+). The protein is Putative agmatine deiminase 1 of Listeria monocytogenes serotype 4b (strain F2365).